The chain runs to 110 residues: uncharacterized protein (110 aa).

In terms of biological role, may play a regulatory role in sulfomenaquinone (SMK) biosynthesis. This is an uncharacterized protein from Mycobacterium bovis (strain ATCC BAA-935 / AF2122/97).